Here is a 112-residue protein sequence, read N- to C-terminus: NADH-quinone oxidoreductase subunit K (112 aa).

3 helical membrane-spanning segments follow: residues 14–34, 39–59, and 76–96; these read LEGY…GALI, VVVF…LVAF, and LIIA…LAIF.

It belongs to the complex I subunit 4L family. As to quaternary structure, NDH-1 is composed of 14 different subunits. Subunits NuoA, H, J, K, L, M, N constitute the membrane sector of the complex.

Its subcellular location is the cell membrane. The catalysed reaction is a quinone + NADH + 5 H(+)(in) = a quinol + NAD(+) + 4 H(+)(out). Functionally, NDH-1 shuttles electrons from NADH, via FMN and iron-sulfur (Fe-S) centers, to quinones in the respiratory chain. The immediate electron acceptor for the enzyme in this species is believed to be a menaquinone. Couples the redox reaction to proton translocation (for every two electrons transferred, four hydrogen ions are translocated across the cytoplasmic membrane), and thus conserves the redox energy in a proton gradient. The protein is NADH-quinone oxidoreductase subunit K of Rubrobacter xylanophilus (strain DSM 9941 / JCM 11954 / NBRC 16129 / PRD-1).